The primary structure comprises 359 residues: Cytoplasmic tRNA 2-thiolation protein 1 (359 aa).

Belongs to the TtcA family. CTU1/NCS6/ATPBD3 subfamily. In terms of assembly, interacts with NCS2 and URM1. May act by forming a heterodimer with NCS2. Component of a large molecular weight complex of more than 250 kDa.

The protein localises to the cytoplasm. Its subcellular location is the mitochondrion. The protein operates within tRNA modification; 5-methoxycarbonylmethyl-2-thiouridine-tRNA biosynthesis. Functionally, plays a central role in 2-thiolation of mcm(5)S(2)U at tRNA wobble positions of tRNA(Lys), tRNA(Glu) and tRNA(Gln). Directly binds tRNAs and probably acts by catalyzing adenylation of tRNAs, an intermediate required for 2-thiolation. It is unclear whether it acts as a sulfurtransferase that transfers sulfur from thiocarboxylated URM1 onto the uridine of tRNAs at wobble position. Prior mcm(5) tRNA modification by the elongator complex is required for 2-thiolation. May also be involved in protein urmylation. The polypeptide is Cytoplasmic tRNA 2-thiolation protein 1 (Saccharomyces cerevisiae (strain RM11-1a) (Baker's yeast)).